The sequence spans 198 residues: NAD(P)H dehydrogenase (quinone) (198 aa).

One can recognise a Flavodoxin-like domain in the interval 4–189 (VLVLYYSMYG…SIARYQGEYV (186 aa)). Residues 10-15 (SMYGHI) and 78-80 (TRF) contribute to the FMN site. Y12 is a binding site for NAD(+). W98 contributes to the substrate binding site. FMN-binding positions include 113–118 (STGTGG) and H133.

The protein belongs to the WrbA family. It depends on FMN as a cofactor.

It carries out the reaction a quinone + NADH + H(+) = a quinol + NAD(+). It catalyses the reaction a quinone + NADPH + H(+) = a quinol + NADP(+). This Escherichia coli (strain SE11) protein is NAD(P)H dehydrogenase (quinone).